A 648-amino-acid chain; its full sequence is MTNFEPKKFKNIWTIEDSISSYNIDKWGDKYFSINSKGNISVTKDIKSENKIDLFKLVKELKSREINPPLIIRFNDILKDRINALHDSFLKAIKTYKYKNIYQGVFPVKCNQQKNVLEKIIEFGSQWNFGLEVGSKSELLIGLALLENQNSLLICNGYKDKKYIEIATLARKLGKNPIIVIEQRDEVKRIIQAVQELKATPLIGIRAKLSSKSSGRWGKSIGDNSKFGLSIPEIMLTIKELKEANLINEMKLLHFHIGSQISDIAVIKDALQEASQIYVELCKLGAPMQYIDVGGGLGIDFDGTKTSSNTSTNYSLQNYANDVIATIKDSCELNNIKHPTIISESGRAIISHCSVLIFNVLGTSHVSSKLQIFDKKNQQLIISNLLDTFYELKKLKNKKINLSQIIELWNDAKKFKEDCLVAFRLGFLSLAERAYAEELTWACAKEISNNLNNDEINHPDLSEITETLASTYYANLSIFKSIPDSWAINQIFPIVPIHRHLEEPFCKGNFADLTCDSDGKLNNFIDNGKIKSLLNLHKPEEDKDYLIGIFMTGAYQEALGNLHNLFGSTNVVHIDINQDNSYKVRNIIKEDSKSEILQLLDYSSASLVESIRINTESAIDQKKLTIEEARKLMDQIEISLRKSSYLSE.

K109 bears the N6-(pyridoxal phosphate)lysine mark. 291 to 301 (IDVGGGLGIDF) contacts substrate.

The protein belongs to the Orn/Lys/Arg decarboxylase class-II family. SpeA subfamily. It depends on Mg(2+) as a cofactor. Requires pyridoxal 5'-phosphate as cofactor.

It carries out the reaction L-arginine + H(+) = agmatine + CO2. Its pathway is amine and polyamine biosynthesis; agmatine biosynthesis; agmatine from L-arginine: step 1/1. Functionally, catalyzes the biosynthesis of agmatine from arginine. This is Biosynthetic arginine decarboxylase from Prochlorococcus marinus (strain AS9601).